Consider the following 671-residue polypeptide: Zinc finger protein 750 (671 aa).

Residues 25–51 (YKCFQCPFTCNEKSHLFNHMKYGLCKN) form a CCHC-type zinc finger. Positions 27, 30, 43, and 49 each coordinate Zn(2+). Disordered regions lie at residues 66–87 (PKVNSTDQKQPSNEPFAKSPVP), 366–433 (ETSP…KDFT), and 592–671 (SSPG…PRVS). Composition is skewed to polar residues over residues 67–78 (KVNSTDQKQPSN) and 402–412 (SPTNFTQNSQG).

It localises to the nucleus. Transcription factor involved in epidermis differentiation. This is Zinc finger protein 750 (znf750) from Xenopus tropicalis (Western clawed frog).